The sequence spans 412 residues: Peptidase T (412 aa).

H84 lines the Zn(2+) pocket. The active site involves D86. D146 provides a ligand contact to Zn(2+). The Proton acceptor role is filled by E179. 3 residues coordinate Zn(2+): E180, D202, and H385.

The protein belongs to the peptidase M20B family. Zn(2+) serves as cofactor.

It is found in the cytoplasm. The enzyme catalyses Release of the N-terminal residue from a tripeptide.. Cleaves the N-terminal amino acid of tripeptides. The sequence is that of Peptidase T from Pasteurella multocida (strain Pm70).